The primary structure comprises 249 residues: DNA polymerase sliding clamp (249 aa).

It belongs to the PCNA family. The subunits circularize to form a toroid; DNA passes through its center. Replication factor C (RFC) is required to load the toroid on the DNA. Homotrimer. Interacts with NucS.

Its function is as follows. Sliding clamp subunit that acts as a moving platform for DNA processing. Responsible for tethering the catalytic subunit of DNA polymerase and other proteins to DNA during high-speed replication. Regulates activity of NucS endonuclease and prevents non-specific cleavage. The chain is DNA polymerase sliding clamp from Pyrococcus abyssi (strain GE5 / Orsay).